Reading from the N-terminus, the 217-residue chain is Segregation and condensation protein B (217 aa).

The protein belongs to the ScpB family. Homodimer. Homodimerization may be required to stabilize the binding of ScpA to the Smc head domains. Component of a cohesin-like complex composed of ScpA, ScpB and the Smc homodimer, in which ScpA and ScpB bind to the head domain of Smc. The presence of the three proteins is required for the association of the complex with DNA.

The protein resides in the cytoplasm. In terms of biological role, participates in chromosomal partition during cell division. May act via the formation of a condensin-like complex containing Smc and ScpA that pull DNA away from mid-cell into both cell halves. In Geobacillus kaustophilus (strain HTA426), this protein is Segregation and condensation protein B.